Reading from the N-terminus, the 129-residue chain is Small ribosomal subunit protein uS11 (129 aa).

Belongs to the universal ribosomal protein uS11 family. In terms of assembly, part of the 30S ribosomal subunit. Interacts with proteins S7 and S18. Binds to IF-3.

Located on the platform of the 30S subunit, it bridges several disparate RNA helices of the 16S rRNA. Forms part of the Shine-Dalgarno cleft in the 70S ribosome. The sequence is that of Small ribosomal subunit protein uS11 from Xanthobacter autotrophicus (strain ATCC BAA-1158 / Py2).